A 165-amino-acid chain; its full sequence is Protein AIG2 C (165 aa).

14–19 (YGSILE) is a binding site for substrate. Residue E82 is the Proton acceptor of the active site.

It belongs to the gamma-glutamylcyclotransferase family. Expressed in floral organs, leaves, stems and roots.

Putative gamma-glutamylcyclotransferase. The protein is Protein AIG2 C of Arabidopsis thaliana (Mouse-ear cress).